A 118-amino-acid chain; its full sequence is Alpha-amylase inhibitor 4 (118 aa).

4 cysteine pairs are disulfide-bonded: Cys-7–Cys-60, Cys-21–Cys-49, Cys-30–Cys-82, and Cys-50–Cys-101.

Belongs to the protease inhibitor I6 (cereal trypsin/alpha-amylase inhibitor) family.

Its subcellular location is the secreted. Its function is as follows. Alpha-amylase inhibitor. In Sorghum bicolor (Sorghum), this protein is Alpha-amylase inhibitor 4.